Here is a 487-residue protein sequence, read N- to C-terminus: Glutamyl-tRNA(Gln) amidotransferase subunit A (487 aa).

Residues Lys-79 and Ser-158 each act as charge relay system in the active site. Ser-182 serves as the catalytic Acyl-ester intermediate.

It belongs to the amidase family. GatA subfamily. As to quaternary structure, heterotrimer of A, B and C subunits.

The enzyme catalyses L-glutamyl-tRNA(Gln) + L-glutamine + ATP + H2O = L-glutaminyl-tRNA(Gln) + L-glutamate + ADP + phosphate + H(+). Its function is as follows. Allows the formation of correctly charged Gln-tRNA(Gln) through the transamidation of misacylated Glu-tRNA(Gln) in organisms which lack glutaminyl-tRNA synthetase. The reaction takes place in the presence of glutamine and ATP through an activated gamma-phospho-Glu-tRNA(Gln). This chain is Glutamyl-tRNA(Gln) amidotransferase subunit A, found in Ehrlichia ruminantium (strain Gardel).